Here is a 729-residue protein sequence, read N- to C-terminus: Dipeptidyl peptidase 3 (729 aa).

Histidine 459 contacts Zn(2+). Residue glutamate 460 is part of the active site. Histidine 464 and glutamate 517 together coordinate Zn(2+).

This sequence belongs to the peptidase M49 family. It depends on Zn(2+) as a cofactor.

The protein localises to the cytoplasm. It carries out the reaction Release of an N-terminal dipeptide from a peptide comprising four or more residues, with broad specificity. Also acts on dipeptidyl 2-naphthylamides.. This Nematostella vectensis (Starlet sea anemone) protein is Dipeptidyl peptidase 3 (dpp3).